A 91-amino-acid polypeptide reads, in one-letter code: UPF0298 protein spyM18_0447 (91 aa).

The protein belongs to the UPF0298 family.

The protein localises to the cytoplasm. In Streptococcus pyogenes serotype M18 (strain MGAS8232), this protein is UPF0298 protein spyM18_0447.